The chain runs to 142 residues: Large ribosomal subunit protein uL16 (142 aa).

The protein belongs to the universal ribosomal protein uL16 family. Part of the 50S ribosomal subunit.

Functionally, binds 23S rRNA and is also seen to make contacts with the A and possibly P site tRNAs. The protein is Large ribosomal subunit protein uL16 of Gemmatimonas aurantiaca (strain DSM 14586 / JCM 11422 / NBRC 100505 / T-27).